We begin with the raw amino-acid sequence, 91 residues long: Acyl carrier protein AsbD (91 aa).

The region spanning 4-82 is the Carrier domain; the sequence is EALKNAVLKI…SLLDFMEELQ (79 aa). An O-(pantetheine 4'-phosphoryl)serine modification is found at S40.

It belongs to the acyl carrier protein (ACP) family. Post-translationally, activated by the transfer of a 4'-phosphopantetheine group from CoA to Ser-40.

Its pathway is siderophore biosynthesis; petrobactin biosynthesis. Functionally, involved in the biosynthesis of petrobactin, a catecholate siderophore that functions in both iron acquisition and virulence. Aryl-carrier protein that activates 3,4-dihydroxybenzoate (3,4-DHBA) prior to its incorporation into petrobactin. The chain is Acyl carrier protein AsbD from Bacillus anthracis.